We begin with the raw amino-acid sequence, 441 residues long: Cysteine--tRNA ligase (441 aa).

C24 is a binding site for Zn(2+). A 'HIGH' region motif is present at residues P26–N36. Residues C204, H230, and E234 each coordinate Zn(2+). The 'KMSKS' region motif lies at K262–S266. K265 lines the ATP pocket.

It belongs to the class-I aminoacyl-tRNA synthetase family. As to quaternary structure, monomer. The cofactor is Zn(2+).

It is found in the cytoplasm. The enzyme catalyses tRNA(Cys) + L-cysteine + ATP = L-cysteinyl-tRNA(Cys) + AMP + diphosphate. The protein is Cysteine--tRNA ligase of Mycoplasma mycoides subsp. mycoides SC (strain CCUG 32753 / NCTC 10114 / PG1).